The primary structure comprises 299 residues: Acetylglutamate kinase (299 aa).

Substrate contacts are provided by residues 70–71 (GG), arginine 92, and asparagine 186.

It belongs to the acetylglutamate kinase family. ArgB subfamily.

The protein resides in the cytoplasm. The catalysed reaction is N-acetyl-L-glutamate + ATP = N-acetyl-L-glutamyl 5-phosphate + ADP. It participates in amino-acid biosynthesis; L-arginine biosynthesis; N(2)-acetyl-L-ornithine from L-glutamate: step 2/4. In terms of biological role, catalyzes the ATP-dependent phosphorylation of N-acetyl-L-glutamate. This is Acetylglutamate kinase from Petrotoga mobilis (strain DSM 10674 / SJ95).